We begin with the raw amino-acid sequence, 491 residues long: Ketol-acid reductoisomerase (NADP(+)) (491 aa).

The KARI N-terminal Rossmann domain maps to 17 to 208 (LGKCRFMSRD…GGHRAGVLES (192 aa)). NADP(+) contacts are provided by residues 45-48 (CGAQ), Arg68, Arg76, Ser78, and 108-110 (DKQ). Residue His132 is part of the active site. Gly158 contributes to the NADP(+) binding site. KARI C-terminal knotted domains follow at residues 209 to 344 (SFVA…NYPE) and 345 to 484 (YEGK…MTDM). Positions 217, 221, 389, and 393 each coordinate Mg(2+). Ser414 lines the substrate pocket.

The protein belongs to the ketol-acid reductoisomerase family. It depends on Mg(2+) as a cofactor.

The enzyme catalyses (2R)-2,3-dihydroxy-3-methylbutanoate + NADP(+) = (2S)-2-acetolactate + NADPH + H(+). It carries out the reaction (2R,3R)-2,3-dihydroxy-3-methylpentanoate + NADP(+) = (S)-2-ethyl-2-hydroxy-3-oxobutanoate + NADPH + H(+). The protein operates within amino-acid biosynthesis; L-isoleucine biosynthesis; L-isoleucine from 2-oxobutanoate: step 2/4. Its pathway is amino-acid biosynthesis; L-valine biosynthesis; L-valine from pyruvate: step 2/4. Its function is as follows. Involved in the biosynthesis of branched-chain amino acids (BCAA). Catalyzes an alkyl-migration followed by a ketol-acid reduction of (S)-2-acetolactate (S2AL) to yield (R)-2,3-dihydroxy-isovalerate. In the isomerase reaction, S2AL is rearranged via a Mg-dependent methyl migration to produce 3-hydroxy-3-methyl-2-ketobutyrate (HMKB). In the reductase reaction, this 2-ketoacid undergoes a metal-dependent reduction by NADPH to yield (R)-2,3-dihydroxy-isovalerate. The polypeptide is Ketol-acid reductoisomerase (NADP(+)) (Proteus mirabilis (strain HI4320)).